The primary structure comprises 365 residues: WAT1-related protein At1g01070 (365 aa).

Helical transmembrane passes span 14–34 (YSPV…NALV), 46–66 (VIGA…AYVL), 83–103 (FVSG…GLSY), 107–127 (TVSC…ALIF), 139–159 (AGML…FLTF), 189–209 (WLLG…WMLF), 221–241 (YSST…LSLY), 255–275 (FVIT…TVAT), 285–305 (VFAS…DFLI), and 310–330 (LYLG…MFLW). Residues 27–157 (MGSVNALVKK…LICISGALFL (131 aa)) form the EamA 1 domain. Residues 223-329 (STCLMSIFAA…VTITGLYMFL (107 aa)) enclose the EamA 2 domain. Residues 340-356 (TALSSGMDNEAQYTTPN) are compositionally biased toward polar residues. The segment at 340-365 (TALSSGMDNEAQYTTPNKDNDSKSPV) is disordered.

It belongs to the drug/metabolite transporter (DMT) superfamily. Plant drug/metabolite exporter (P-DME) (TC 2.A.7.4) family.

It is found in the membrane. The protein is WAT1-related protein At1g01070 of Arabidopsis thaliana (Mouse-ear cress).